The primary structure comprises 92 residues: Small ribosomal subunit protein uS19 (92 aa).

It belongs to the universal ribosomal protein uS19 family.

Its function is as follows. Protein S19 forms a complex with S13 that binds strongly to the 16S ribosomal RNA. In Rhodospirillum centenum (strain ATCC 51521 / SW), this protein is Small ribosomal subunit protein uS19.